The chain runs to 253 residues: uncharacterized protein (253 aa).

A signal peptide spans 1-15 (MNRVILFHFHFFKNA).

This is an uncharacterized protein from Archaeoglobus fulgidus (strain ATCC 49558 / DSM 4304 / JCM 9628 / NBRC 100126 / VC-16).